The chain runs to 284 residues: Tropomyosin (284 aa).

Residues 1–284 (MDAIKKKMQA…DQTFQELSGY (284 aa)) adopt a coiled-coil conformation. The segment covering 110-142 (TAKLEEATHTADESERVRKVMENRSFQDEERAN) has biased composition (basic and acidic residues). The interval 110–143 (TAKLEEATHTADESERVRKVMENRSFQDEERANT) is disordered.

The protein belongs to the tropomyosin family.

In terms of biological role, tropomyosin, in association with the troponin complex, plays a central role in the calcium dependent regulation of muscle contraction. The chain is Tropomyosin from Anisakis simplex (Herring worm).